The sequence spans 239 residues: Purine nucleoside phosphorylase DeoD-type (239 aa).

His5 provides a ligand contact to a purine D-ribonucleoside. Phosphate is bound by residues Gly21, Arg25, Arg44, and 88-91 (RVGS). Residues 180–182 (EME) and 204–205 (SD) contribute to the a purine D-ribonucleoside site. Asp205 acts as the Proton donor in catalysis.

The protein belongs to the PNP/UDP phosphorylase family. Homohexamer; trimer of homodimers.

It catalyses the reaction a purine D-ribonucleoside + phosphate = a purine nucleobase + alpha-D-ribose 1-phosphate. The catalysed reaction is a purine 2'-deoxy-D-ribonucleoside + phosphate = a purine nucleobase + 2-deoxy-alpha-D-ribose 1-phosphate. Its function is as follows. Catalyzes the reversible phosphorolytic breakdown of the N-glycosidic bond in the beta-(deoxy)ribonucleoside molecules, with the formation of the corresponding free purine bases and pentose-1-phosphate. The sequence is that of Purine nucleoside phosphorylase DeoD-type from Salmonella choleraesuis (strain SC-B67).